We begin with the raw amino-acid sequence, 277 residues long: Large ribosomal subunit protein uL2 (277 aa).

The tract at residues 199–277 (DHGNINDGKA…ILRSRHQRKS (79 aa)) is disordered.

Belongs to the universal ribosomal protein uL2 family. As to quaternary structure, part of the 50S ribosomal subunit. Forms a bridge to the 30S subunit in the 70S ribosome.

In terms of biological role, one of the primary rRNA binding proteins. Required for association of the 30S and 50S subunits to form the 70S ribosome, for tRNA binding and peptide bond formation. It has been suggested to have peptidyltransferase activity; this is somewhat controversial. Makes several contacts with the 16S rRNA in the 70S ribosome. The polypeptide is Large ribosomal subunit protein uL2 (Mesorhizobium japonicum (strain LMG 29417 / CECT 9101 / MAFF 303099) (Mesorhizobium loti (strain MAFF 303099))).